A 138-amino-acid chain; its full sequence is Putative nickel-responsive regulator (138 aa).

The Ni(2+) site is built by His-78, His-89, His-91, and Cys-97.

This sequence belongs to the transcriptional regulatory CopG/NikR family. The cofactor is Ni(2+).

Its function is as follows. Transcriptional regulator. The protein is Putative nickel-responsive regulator of Desulfovibrio desulfuricans (strain ATCC 27774 / DSM 6949 / MB).